Here is a 281-residue protein sequence, read N- to C-terminus: Transcription factor lfc1 (281 aa).

The zn(2)-C6 fungal-type DNA-binding region spans 60 to 87; the sequence is CLTCRMKKIKCDETKPTCARCTHGQREC.

It is found in the nucleus. Functionally, transcription factor that acts as a negative regulator of basidioma development via repressing the expression of genes involved in basidioma development, including hydrophobins such as Hyd-1 and Hyd-8, lectins such as JRL1, as well as the fruiting body differentiation gene FVFD16. The polypeptide is Transcription factor lfc1 (Flammulina velutipes (Agaricus velutipes)).